The primary structure comprises 252 residues: Imidazole glycerol phosphate synthase subunit HisF (252 aa).

Residues D11 and D130 contribute to the active site.

This sequence belongs to the HisA/HisF family. In terms of assembly, heterodimer of HisH and HisF.

It localises to the cytoplasm. It catalyses the reaction 5-[(5-phospho-1-deoxy-D-ribulos-1-ylimino)methylamino]-1-(5-phospho-beta-D-ribosyl)imidazole-4-carboxamide + L-glutamine = D-erythro-1-(imidazol-4-yl)glycerol 3-phosphate + 5-amino-1-(5-phospho-beta-D-ribosyl)imidazole-4-carboxamide + L-glutamate + H(+). It participates in amino-acid biosynthesis; L-histidine biosynthesis; L-histidine from 5-phospho-alpha-D-ribose 1-diphosphate: step 5/9. Its function is as follows. IGPS catalyzes the conversion of PRFAR and glutamine to IGP, AICAR and glutamate. The HisF subunit catalyzes the cyclization activity that produces IGP and AICAR from PRFAR using the ammonia provided by the HisH subunit. The chain is Imidazole glycerol phosphate synthase subunit HisF from Bacillus cereus (strain Q1).